Reading from the N-terminus, the 223-residue chain is Neurotrophic factor BDNF precursor form (223 aa).

An N-terminal signal peptide occupies residues 1–5 (SCMKA). Positions 6–114 (APMKEVSIRG…AANMSMRVRR (109 aa)) are excised as a propeptide. Asparagine 107 is a glycosylation site (N-linked (GlcNAc...) asparagine). Cystine bridges form between cysteine 127–cysteine 194 and cysteine 172–cysteine 223.

The protein belongs to the NGF-beta family.

Its subcellular location is the secreted. Promotes the survival of neuronal populations that are all located either in the central nervous system or directly connected to it. The protein is Neurotrophic factor BDNF precursor form (BDNF) of Eryx johnii (Indian red sand boa).